A 444-amino-acid chain; its full sequence is Bifunctional enolase 2/transcriptional activator (444 aa).

Positions 163 and 172 each coordinate substrate. Glu-215 acts as the Proton donor in catalysis. Mg(2+) contacts are provided by Asp-250, Glu-300, and Asp-327. Substrate is bound by residues Glu-300 and Asp-327. The Proton acceptor role is filled by Lys-352. Substrate is bound by residues 379–382 and Lys-403; that span reads SHRS.

The protein belongs to the enolase family. In terms of assembly, homodimer. Mg(2+) is required as a cofactor.

The protein resides in the cytoplasm. The protein localises to the cytosol. It is found in the nucleus. It localises to the mitochondrion outer membrane. The enzyme catalyses (2R)-2-phosphoglycerate = phosphoenolpyruvate + H2O. It participates in carbohydrate degradation; glycolysis; pyruvate from D-glyceraldehyde 3-phosphate: step 4/5. Functionally, multifunctional enzyme that acts as an enolase involved in the metabolism and as a positive regulator of cold-responsive gene transcription. Binds to the cis-element the gene promoter of STZ/ZAT10, a zinc finger transcriptional repressor. The polypeptide is Bifunctional enolase 2/transcriptional activator (ENO2) (Arabidopsis thaliana (Mouse-ear cress)).